Reading from the N-terminus, the 126-residue chain is Aspartate 1-decarboxylase (126 aa).

The active-site Schiff-base intermediate with substrate; via pyruvic acid is Ser25. Ser25 carries the post-translational modification Pyruvic acid (Ser). Substrate is bound at residue Thr57. The Proton donor role is filled by Tyr58. Gly73–Ala75 is a substrate binding site.

It belongs to the PanD family. As to quaternary structure, heterooctamer of four alpha and four beta subunits. Pyruvate serves as cofactor. In terms of processing, is synthesized initially as an inactive proenzyme, which is activated by self-cleavage at a specific serine bond to produce a beta-subunit with a hydroxyl group at its C-terminus and an alpha-subunit with a pyruvoyl group at its N-terminus.

The protein localises to the cytoplasm. It catalyses the reaction L-aspartate + H(+) = beta-alanine + CO2. It participates in cofactor biosynthesis; (R)-pantothenate biosynthesis; beta-alanine from L-aspartate: step 1/1. In terms of biological role, catalyzes the pyruvoyl-dependent decarboxylation of aspartate to produce beta-alanine. The protein is Aspartate 1-decarboxylase of Tolumonas auensis (strain DSM 9187 / NBRC 110442 / TA 4).